A 757-amino-acid polypeptide reads, in one-letter code: Probable serine/threonine-protein kinase pknA2 (757 aa).

The Protein kinase domain occupies 14–274 (YRIVRNIAEG…DGAAAAEELS (261 aa)). Residues 20-28 (IAEGGMATV) and Lys-43 contribute to the ATP site. The Proton acceptor role is filled by Asp-140. The segment at 344–387 (DTGGAADVNPPAPPVAPTTALDSSTPADASAPHKTQIMAQSGSE) is disordered. PASTA domains follow at residues 466–539 (DANA…VVSK), 545–614 (TIPK…TLSK), and 615–681 (GPMP…VISK).

Belongs to the protein kinase superfamily. Ser/Thr protein kinase family.

It catalyses the reaction L-seryl-[protein] + ATP = O-phospho-L-seryl-[protein] + ADP + H(+). The catalysed reaction is L-threonyl-[protein] + ATP = O-phospho-L-threonyl-[protein] + ADP + H(+). In Bifidobacterium longum (strain NCC 2705), this protein is Probable serine/threonine-protein kinase pknA2 (pknA2).